Reading from the N-terminus, the 800-residue chain is Ent-copalyl diphosphate synthase 2, chloroplastic (800 aa).

The transit peptide at methionine 1 to cysteine 47 directs the protein to the chloroplast. A disordered region spans residues glutamine 52–alanine 80. Positions glutamate 55–arginine 69 are enriched in basic and acidic residues. Residue lysine 242 coordinates substrate. Positions 374 and 376 each coordinate Mg(2+). The DXDD motif signature appears at aspartate 374 to aspartate 377. A substrate-binding site is contributed by lysine 461.

Belongs to the terpene synthase family. It depends on Mg(2+) as a cofactor.

The protein localises to the plastid. It is found in the chloroplast. It catalyses the reaction (2E,6E,10E)-geranylgeranyl diphosphate = ent-copalyl diphosphate. The protein operates within secondary metabolite biosynthesis; terpenoid biosynthesis. In terms of biological role, catalyzes the conversion of geranylgeranyl diphosphate to the phytoalexin precursor ent-copalyl diphosphate. The sequence is that of Ent-copalyl diphosphate synthase 2, chloroplastic from Oryza sativa subsp. japonica (Rice).